Consider the following 421-residue polypeptide: D-amino-acid oxidase (421 aa).

FAD is bound by residues A12, G13, A14, V15, G47, G64, I65, K225, A226, R359, G385, G388, and L389. R359 contributes to the D-proline binding site. R359 contributes to the D-serine binding site.

This sequence belongs to the DAMOX/DASOX family. FAD serves as cofactor.

It is found in the cytoplasm. It localises to the secreted. Its subcellular location is the cell wall. It carries out the reaction a D-alpha-amino acid + O2 + H2O = a 2-oxocarboxylate + H2O2 + NH4(+). Catalyzes the oxidative deamination of D-amino acids with broad substrate specificity. The chain is D-amino-acid oxidase from Bradyrhizobium diazoefficiens (strain JCM 10833 / BCRC 13528 / IAM 13628 / NBRC 14792 / USDA 110).